The sequence spans 206 residues: Small ribosomal subunit protein uS4 (206 aa).

In terms of domain architecture, S4 RNA-binding spans 96–156; it reads GRLDNVVYRM…EKSKKQARIK (61 aa).

It belongs to the universal ribosomal protein uS4 family. In terms of assembly, part of the 30S ribosomal subunit. Contacts protein S5. The interaction surface between S4 and S5 is involved in control of translational fidelity.

Its function is as follows. One of the primary rRNA binding proteins, it binds directly to 16S rRNA where it nucleates assembly of the body of the 30S subunit. Functionally, with S5 and S12 plays an important role in translational accuracy. The chain is Small ribosomal subunit protein uS4 from Actinobacillus succinogenes (strain ATCC 55618 / DSM 22257 / CCUG 43843 / 130Z).